We begin with the raw amino-acid sequence, 218 residues long: Regulator of G-protein signaling 20 (218 aa).

Over residues 1 to 10 (MGSERTEMRK) the composition is skewed to basic and acidic residues. The interval 1–26 (MGSERTEMRKRQMAATQETPGTAQAQ) is disordered. A compositionally biased stretch (polar residues) spans 14-26 (AATQETPGTAQAQ). In terms of domain architecture, RGS spans 92–208 (SFDKLMLTPA…MNSAIYKDLL (117 aa)).

Forms a complex with G(alpha)z/i2 subunits and mu-opioid receptors; the formation of this complex results in mu-opioid receptor desensitization. Interacts with OPRM1. In terms of processing, fatty acylated. Heavily palmitoylated in the cysteine string motif. N- and O-glycosylated in synapsomal membranes. Post-translationally, sumoylated by SUMO1 and SUM02 in synaptosomes. The sumoylated forms act as a scaffold for sequestering mu-opioid receptor-activated G(alpha) subunits.

The protein resides in the membrane. It is found in the nucleus. The protein localises to the cytoplasm. In terms of biological role, inhibits signal transduction by increasing the GTPase activity of G protein alpha subunits thereby driving them into their inactive GDP-bound form. Binds selectively to G(z)-alpha and G(alpha)-i2 subunits, accelerates their GTPase activity and regulates their signaling activities. The G(z)-alpha activity is inhibited by the phosphorylation and palmitoylation of the G-protein. Negatively regulates mu-opioid receptor-mediated activation of the G-proteins. The protein is Regulator of G-protein signaling 20 (RGS20) of Gallus gallus (Chicken).